The chain runs to 80 residues: Metallothionein-like protein type 2 MET1 (80 aa).

Belongs to the metallothionein superfamily. Type 15 family.

Its function is as follows. Metallothioneins have a high content of cysteine residues that bind various heavy metals. The chain is Metallothionein-like protein type 2 MET1 (MET1) from Fragaria ananassa (Strawberry).